Reading from the N-terminus, the 636-residue chain is MEQYKRILLKEFDSRQKVITELTNLEAILNLPKGTELYISDIHGEFEAFDYILRSCAGILNEKIKDCFGDSLSQDDKNRLSALVSYPELVLKEGNKSRDWYKDTIPQLLSLLAFAAAKYSRSKLRKALPPQYAYIIEELVYSDTALADKKSYFENILSYVIELREAVPFILGISGSIRRLLIDHLHVVGDIFDRGAGSPQVMDELLHFHSLDIQWGNHDIIWMGGFFGSKACMLNALRIAARYGYLWDIEKAYGLNLRALTLFADRTYKTNPKFRPILGHREVDFTAEEILQLEKVHQALTIIQFKLESQLIKRRPEFQMEDQVTLDKIDYWEECLTIDDKKHPLINTCFQTIDPTNPSELSPEEAQAVDSMLASFQGSLKLAEHINLLMKKGSMYKIYNQHLLFHGCIPLEPSGEFQPLMIHQAHYVGRKLLDFFEYHIRQAAKNKEIGDDFSTDLIWYCWRGKLSPLFGKDKMTTLERYFIEDKETHKEVENSYFSYRNSEKICQLILEEFGLFSQESRMVNGHTPVKTGKGESPIRGGGLLFVIDGGLCEAYQEKTGTAGYSLLNNSYGFQLVTHQPFQNAQKVVEAPFAQTSLKKVIENVEQRTLIKSTSIGQILMAQQQELFALLHEFYDF.

The protein belongs to the FBPase class 3 family. Mn(2+) is required as a cofactor.

It carries out the reaction beta-D-fructose 1,6-bisphosphate + H2O = beta-D-fructose 6-phosphate + phosphate. It participates in carbohydrate biosynthesis; gluconeogenesis. The chain is Fructose-1,6-bisphosphatase class 3 from Streptococcus gordonii (strain Challis / ATCC 35105 / BCRC 15272 / CH1 / DL1 / V288).